The following is a 260-amino-acid chain: Thrombin-like enzyme bhalternin (260 aa).

The signal sequence occupies residues 1 to 18 (MVLIRVLANLLILQLSYA). A propeptide spanning residues 19 to 24 (QKASEL) is cleaved from the precursor. In terms of domain architecture, Peptidase S1 spans 25–251 (VIGGDECNIN…YSEWIQSIIA (227 aa)). Cystine bridges form between cysteine 31–cysteine 165, cysteine 50–cysteine 66, cysteine 144–cysteine 212, cysteine 176–cysteine 191, and cysteine 202–cysteine 227. A glycan (N-linked (GlcNAc...) asparagine) is linked at asparagine 44. An N-linked (GlcNAc...) asparagine glycan is attached at asparagine 81.

This sequence belongs to the peptidase S1 family. Snake venom subfamily. Monomer. In terms of tissue distribution, expressed by the venom gland.

The protein localises to the secreted. With respect to regulation, inhibited by benzamidine and partially inhibited by EDTA. Its function is as follows. Thrombin-like snake venom serine protease that induces blood clotting in vitro, defibrinogenation in vivo (by intraperitoneal injection into mice), albuminolytic and fibrinogenolytic activities. Preferentially cleaves the alpha chain of fibrinogen (FGA). Causes hemolysis in the heart, causes apparent hyperemia and lymphocytic interstitial pneumonitis in the lung, causes necrosis and inflammatory infiltrate in the liver, and causes glomerular congestion in the kidney. Also provokes a drastic myonecrosis. This is Thrombin-like enzyme bhalternin from Bothrops alternatus (Urutu).